Here is a 793-residue protein sequence, read N- to C-terminus: DnaJ homolog subfamily C member 10 (793 aa).

The signal sequence occupies residues 1–32; sequence MGVWLNRDEFIRDVKRISLCLLVLYVVIVVGT. The 66-residue stretch at 35-100 folds into the J domain; the sequence is NFYSLLGVSK…DLRKKYDKYG (66 aa). The Thioredoxin 1 domain occupies 130–232; sequence EIITLERREF…ESLVSFAMQH (103 aa). A disulfide bridge connects residues Cys158 and Cys161. Trxb regions lie at residues 235 to 350 and 348 to 463; these read TTVT…LPDF and PDFE…PQNF. Thioredoxin domains lie at 454 to 553, 557 to 665, and 671 to 776; these read HVTT…IEDL, SVVS…SWGL, and ASID…ALIY. Cys480 and Cys483 are joined by a disulfide. Asn530 carries an N-linked (GlcNAc...) asparagine glycan. Disulfide bonds link Cys588–Cys591 and Cys700–Cys703. Residues 790-793 carry the Prevents secretion from ER motif; it reads KDEL.

Interacts with HSPA5 (via its J domain). Interacts with EDEM1.

The protein resides in the endoplasmic reticulum lumen. Endoplasmic reticulum disulfide reductase involved both in the correct folding of proteins and degradation of misfolded proteins. Required for efficient folding of proteins in the endoplasmic reticulum by catalyzing the removal of non-native disulfide bonds formed during the folding of proteins, such as LDLR. Also involved in endoplasmic reticulum-associated degradation (ERAD) by reducing incorrect disulfide bonds in misfolded glycoproteins recognized by EDEM1. Interaction with HSPA5 is required its activity, not for the disulfide reductase activity, but to facilitate the release of DNAJC10 from its substrate. Promotes apoptotic signaling pathway in response to endoplasmic reticulum stress. The sequence is that of DnaJ homolog subfamily C member 10 (Dnajc10) from Rattus norvegicus (Rat).